The sequence spans 130 residues: MIVGAGGGADMNARGAMGRYGETLAARRLTGAGMTVLERNWRCGRTGEIDIVARDGDVLVVCEVKTRRGGAFEHPMAAVTPDKAERLRRLAERWIQTHGGAPPGGVRIDLVGVLLPQRGAPVVEHARGVA.

It belongs to the UPF0102 family.

This chain is UPF0102 protein SCO5602, found in Streptomyces coelicolor (strain ATCC BAA-471 / A3(2) / M145).